The primary structure comprises 405 residues: Serine/threonine-protein kinase SSN3 (405 aa).

Residues 40 to 350 (YEIIGYIAAG…ANDALLHPYF (311 aa)) form the Protein kinase domain. Residues 46–54 (IAAGTYGRV) and Lys-71 each bind ATP. Asp-173 acts as the Proton acceptor in catalysis. Residues 377 to 405 (DSDIKTMTYQGTKRGSQGGDNLHPRKKQK) are disordered. A compositionally biased stretch (polar residues) spans 381–391 (KTMTYQGTKRG).

Belongs to the protein kinase superfamily. CMGC Ser/Thr protein kinase family. CDC2/CDKX subfamily. As to quaternary structure, component of the srb8-11 complex, a regulatory module of the Mediator complex. The cofactor is Mg(2+).

It localises to the nucleus. It carries out the reaction L-seryl-[protein] + ATP = O-phospho-L-seryl-[protein] + ADP + H(+). The catalysed reaction is L-threonyl-[protein] + ATP = O-phospho-L-threonyl-[protein] + ADP + H(+). It catalyses the reaction [DNA-directed RNA polymerase] + ATP = phospho-[DNA-directed RNA polymerase] + ADP + H(+). Functionally, component of the srb8-11 complex. The srb8-11 complex is a regulatory module of the Mediator complex which is itself dependent transcription. The srb8-11 complex may be involved in the transcriptional repression of a subset of genes regulated by Mediator. It may inhibit the association of the Mediator complex with RNA polymerase II to form the holoenzyme complex. The srb8-11 complex phosphorylates the C-terminal domain (CTD) of the largest subunit of RNA polymerase II. In Yarrowia lipolytica (strain CLIB 122 / E 150) (Yeast), this protein is Serine/threonine-protein kinase SSN3 (SSN3).